Reading from the N-terminus, the 83-residue chain is MEDERIYTIPLRDVTNNSPSTKRAPRAMRKIRDFLKRHTKSDNIKIDNSINEKVWERSLNKIPARIRVKVVKEDDMVIATLIK.

It belongs to the eukaryotic ribosomal protein eL31 family.

In Methanococcus aeolicus (strain ATCC BAA-1280 / DSM 17508 / OCM 812 / Nankai-3), this protein is Large ribosomal subunit protein eL31.